A 417-amino-acid chain; its full sequence is MFSKQDQIQGYDDALLSAMNAEEQRQEDHIELIASENYTSKRVMQAQGSGLTNKYAEGYPGKRYYGGCEHVDKVEQLAIERAKQLFGADYANVQPHSGSQANAAVYLALLQAGDTVLGMSLAHGGHLTHGAKVSFSGKLYNAVQYGIDTTTGLIDYDEVERIAVECQPKMIIAGFSAYSKTLDFPRFREIADKVGAYLFVDMAHVAGLVAAGLYPNPLPYADVVTTTTHKTLRGPRGGLILAKANEELEKKFNSAVFPGGQGGPLMHVIAAKAVCFKEAMEPGFKAYQQQVIDNAQAMAQVFIDRGFDVVSGGTDNHLFLVSLIRQGLTGKDADAALGRAHITVNKNSVPNDPQSPFVTSGLRIGTPAVTTRGFKVTQCVELAGWICDILDNLGDADVEANVASQVAALCADFPVYR.

(6S)-5,6,7,8-tetrahydrofolate contacts are provided by residues Leu121 and 125-127 (GHL). Lys230 carries the N6-(pyridoxal phosphate)lysine modification. A (6S)-5,6,7,8-tetrahydrofolate-binding site is contributed by 355–357 (SPF).

It belongs to the SHMT family. In terms of assembly, homodimer. Pyridoxal 5'-phosphate is required as a cofactor.

It is found in the cytoplasm. The enzyme catalyses (6R)-5,10-methylene-5,6,7,8-tetrahydrofolate + glycine + H2O = (6S)-5,6,7,8-tetrahydrofolate + L-serine. It participates in one-carbon metabolism; tetrahydrofolate interconversion. It functions in the pathway amino-acid biosynthesis; glycine biosynthesis; glycine from L-serine: step 1/1. Functionally, catalyzes the reversible interconversion of serine and glycine with tetrahydrofolate (THF) serving as the one-carbon carrier. This reaction serves as the major source of one-carbon groups required for the biosynthesis of purines, thymidylate, methionine, and other important biomolecules. Also exhibits THF-independent aldolase activity toward beta-hydroxyamino acids, producing glycine and aldehydes, via a retro-aldol mechanism. The chain is Serine hydroxymethyltransferase 2 from Pseudomonas savastanoi pv. phaseolicola (strain 1448A / Race 6) (Pseudomonas syringae pv. phaseolicola (strain 1448A / Race 6)).